A 370-amino-acid chain; its full sequence is Cytochrome b (370 aa).

Helical transmembrane passes span 25–45 (FGSM…FLAV), 69–90 (WLMQ…YIHI), 105–125 (WLSG…GYVL), and 170–190 (FFAL…LHIM). The heme b site is built by H75 and H89. Heme b is bound by residues H174 and H188. H193 contacts a ubiquinone. Transmembrane regions (helical) follow at residues 218–238 (YKDL…VSFF), 280–300 (LGGA…PFTH), 312–332 (FMQL…WTAT), and 339–358 (FTTI…ISNP).

Belongs to the cytochrome b family. In terms of assembly, the cytochrome bc1 complex contains 3 respiratory subunits (MT-CYB, CYC1 and UQCRFS1), 2 core proteins (UQCRC1 and UQCRC2) and probably 6 low-molecular weight proteins. Requires heme b as cofactor.

The protein localises to the mitochondrion inner membrane. Functionally, component of the ubiquinol-cytochrome c reductase complex (complex III or cytochrome b-c1 complex) that is part of the mitochondrial respiratory chain. The b-c1 complex mediates electron transfer from ubiquinol to cytochrome c. Contributes to the generation of a proton gradient across the mitochondrial membrane that is then used for ATP synthesis. This chain is Cytochrome b (MT-CYB), found in Chilabothrus fordii (Ford's boa).